A 221-amino-acid polypeptide reads, in one-letter code: GTP-binding nuclear protein Ran-B1 (221 aa).

A Small GTPase Ran-type domain is found at 10–174 (DYPSFKLVIV…LYLARKLAGD (165 aa)). Residue 21-28 (DGGTGKTT) participates in GTP binding. Residues 40–48 (KKYEPTIGV) form a switch-I region. GTP-binding positions include Gly71, 125 to 128 (NKVD), and 153 to 155 (SAK). Residues 71–87 (GQEKFGGLRDGYYIHGQ) are switch-II.

The protein belongs to the small GTPase superfamily. Ran family. Found in a nuclear export complex with RanGTP, exportin and pre-miRNA.

It is found in the nucleus. Functionally, GTP-binding protein involved in nucleocytoplasmic transport. Required for the import of protein into the nucleus and also for RNA export. Involved in chromatin condensation and control of cell cycle. The polypeptide is GTP-binding nuclear protein Ran-B1 (RAN-B1) (Nicotiana tabacum (Common tobacco)).